Consider the following 357-residue polypeptide: Glycerol-3-phosphate dehydrogenase [NAD(P)+] (357 aa).

S30, F31, R51, and K124 together coordinate NADPH. 2 residues coordinate sn-glycerol 3-phosphate: K124 and G152. A156 provides a ligand contact to NADPH. Sn-glycerol 3-phosphate is bound by residues K207, D260, S270, R271, and N272. K207 acts as the Proton acceptor in catalysis. R271 is a binding site for NADPH. E297 contacts NADPH.

It belongs to the NAD-dependent glycerol-3-phosphate dehydrogenase family.

It localises to the cytoplasm. The enzyme catalyses sn-glycerol 3-phosphate + NAD(+) = dihydroxyacetone phosphate + NADH + H(+). It carries out the reaction sn-glycerol 3-phosphate + NADP(+) = dihydroxyacetone phosphate + NADPH + H(+). It participates in membrane lipid metabolism; glycerophospholipid metabolism. In terms of biological role, catalyzes the reduction of the glycolytic intermediate dihydroxyacetone phosphate (DHAP) to sn-glycerol 3-phosphate (G3P), the key precursor for phospholipid synthesis. In Acinetobacter baumannii (strain SDF), this protein is Glycerol-3-phosphate dehydrogenase [NAD(P)+].